Reading from the N-terminus, the 202-residue chain is Small ribosomal subunit protein uS4c (202 aa).

Positions 1-13 (MSRYRGPRMKMIR) are enriched in basic residues. The tract at residues 1-41 (MSRYRGPRMKMIRRPGTLPGLTSKTPGTKVGSSDRSTSSKK) is disordered. Low complexity predominate over residues 29 to 41 (KVGSSDRSTSSKK). In terms of domain architecture, S4 RNA-binding spans 90–153 (MRLDNTIFRL…KCRLVDRRDM (64 aa)).

This sequence belongs to the universal ribosomal protein uS4 family. In terms of assembly, part of the 30S ribosomal subunit. Contacts protein S5. The interaction surface between S4 and S5 is involved in control of translational fidelity.

The protein localises to the plastid. Functionally, one of the primary rRNA binding proteins, it binds directly to 16S rRNA where it nucleates assembly of the body of the 30S subunit. Its function is as follows. With S5 and S12 plays an important role in translational accuracy. This Aneura mirabilis (Parasitic liverwort) protein is Small ribosomal subunit protein uS4c (rps4).